The following is a 94-amino-acid chain: Large ribosomal subunit protein eL42 (94 aa).

4 residues coordinate Zn(2+): Cys11, Cys14, Cys70, and Cys73. Residues 11 to 73 (CPYCKKHTIH…IDLRFKCTEC (63 aa)) form a C4-type zinc finger.

This sequence belongs to the eukaryotic ribosomal protein eL42 family. In terms of assembly, part of the 50S ribosomal subunit. Zn(2+) is required as a cofactor.

Its function is as follows. Binds to the 23S rRNA. The chain is Large ribosomal subunit protein eL42 from Methanocaldococcus jannaschii (strain ATCC 43067 / DSM 2661 / JAL-1 / JCM 10045 / NBRC 100440) (Methanococcus jannaschii).